Reading from the N-terminus, the 138-residue chain is Protein FAM216B (138 aa).

The protein belongs to the FAM216 family.

The chain is Protein FAM216B (Fam216b) from Mus musculus (Mouse).